Here is a 933-residue protein sequence, read N- to C-terminus: Isoleucine--tRNA ligase (933 aa).

Positions 57–67 (PYANGNIHVGH) match the 'HIGH' region motif. Glutamate 554 contacts L-isoleucyl-5'-AMP. The 'KMSKS' region signature appears at 595-599 (KMSKS). Lysine 598 is a binding site for ATP.

It belongs to the class-I aminoacyl-tRNA synthetase family. IleS type 1 subfamily. In terms of assembly, monomer.

It is found in the cytoplasm. It catalyses the reaction tRNA(Ile) + L-isoleucine + ATP = L-isoleucyl-tRNA(Ile) + AMP + diphosphate. Functionally, catalyzes the attachment of isoleucine to tRNA(Ile). As IleRS can inadvertently accommodate and process structurally similar amino acids such as valine, to avoid such errors it has two additional distinct tRNA(Ile)-dependent editing activities. One activity is designated as 'pretransfer' editing and involves the hydrolysis of activated Val-AMP. The other activity is designated 'posttransfer' editing and involves deacylation of mischarged Val-tRNA(Ile). The chain is Isoleucine--tRNA ligase from Streptococcus pyogenes serotype M1.